The sequence spans 544 residues: MRLNSVALLSLVATALAAKAPFKIDFEVRRGESKDDLSPEDDSNPRFVKRDGSLDMTLTNKQTFYMATLKIGSNEDENRVLVDTGSSDLWVMSHDLKCVSAPNSKRNERSFGHGTGVKLNERELMQKRKNLYQPSRTIETDEEKEASEKIHNKLFGFGSIYSTVYITEGPGAYSTFSPFVGTEGGSGGSGGSNTCTSYGSFNTENSDTFKKNNTNDFEIQYADDTSAIGIWGYDDVTISNVTVKDLSFAIANETSSDVGVLGIGLPGLEVTTQYGYTYQNLPLKLKADGIIAKSLYSLYLNTADAKAGSILFGAIDHAKYQGDLVTVKMMRTYSQISYPVRIQVPVSKIDVESSSGSTTNILSSTTGVVLDTGSTLSYVFSDTLQSLGKALNGQYSNSVGAYVVNCNLADSSRTVDIEFGGNKTIKVPISDLVLQASKSTCILGVMQQSSSSSYMLFGDNILRSAYIVYDLDDYEVSLAQVSYTNKESIEVIGASGITNSSGSGTTSSSGTSTSTSTRHSAGSIISKPVYGLLLSLLISCYVLV.

The signal sequence occupies residues 1–17 (MRLNSVALLSLVATALA). Positions 31 to 50 (GESKDDLSPEDDSNPRFVKR) are disordered. Residues 65–479 (YMATLKIGSN…DLDDYEVSLA (415 aa)) form the Peptidase A1 domain. D83 is an active-site residue. A pepstatin A-binding site is contributed by 83-85 (DTG). C98 and C195 are joined by a disulfide. 3 N-linked (GlcNAc...) asparagine glycosylation sites follow: N212, N240, and N252. D371 is an active-site residue. 371-375 (DTGST) contacts pepstatin A. Cysteines 406 and 441 form a disulfide. N-linked (GlcNAc...) asparagine glycans are attached at residues N422 and N499. The tract at residues 500–519 (SSGSGTTSSSGTSTSTSTRH) is disordered. A lipid anchor (GPI-anchor amidated serine) is attached at S520. Residues 521–544 (AGSIISKPVYGLLLSLLISCYVLV) constitute a propeptide, removed in mature form. The helical transmembrane segment at 524–544 (IISKPVYGLLLSLLISCYVLV) threads the bilayer.

Belongs to the peptidase A1 family. Monomer. In terms of processing, the GPI-anchor is attached to the protein in the endoplasmic reticulum and serves to target the protein to the cell surface. There, the glucosamine-inositol phospholipid moiety is cleaved off and the GPI-modified mannoprotein is covalently attached via its lipidless GPI glycan remnant to the 1,6-beta-glucan of the outer cell wall layer.

It is found in the cell membrane. The protein localises to the secreted. Its subcellular location is the cell wall. It catalyses the reaction Preferential cleavage at the carboxyl of hydrophobic amino acids, but fails to cleave 15-Leu-|-Tyr-16, 16-Tyr-|-Leu-17 and 24-Phe-|-Phe-25 of insulin B chain. Activates trypsinogen, and degrades keratin.. Secreted aspartic peptidases (SAPs) are a group of ten acidic hydrolases considered as key virulence factors. These enzymes supply the fungus with nutrient amino acids as well as are able to degrade the selected host's proteins involved in the immune defense. Moreover, acts toward human hemoglobin though limited proteolysis to generate a variety of antimicrobial hemocidins, enabling to compete with the other microorganisms of the same physiological niche using the microbicidal peptides generated from the host protein. Its function is as follows. Plays a key role in defense against host by cleaving histatin-5 (Hst 5), a peptide from human saliva that carries out fungicidal activity. The cleavage rate decreases in an order of SAP2 &gt; SAP9 &gt; SAP3 &gt; SAP7 &gt; SAP4 &gt; SAP1 &gt; SAP8. The first cleavage occurs between residues 'Lys-17' and 'His-18' of Hst 5, giving DSHAKRHHGYKRKFHEK and HHSHRGY peptides. Simultaneously, the DSHAKRHHGYKRK peptide is also formed. Further fragmentation by SAP9 results in FHEK product. This is Secreted aspartic protease 9 from Candida albicans (strain SC5314 / ATCC MYA-2876) (Yeast).